We begin with the raw amino-acid sequence, 178 residues long: Protein GrpE (178 aa).

Residues 1 to 11 (MAEDQAPREET) show a composition bias toward basic and acidic residues. Residues 1–30 (MAEDQAPREETVEAPELTEAPEIDELETLR) are disordered.

The protein belongs to the GrpE family. In terms of assembly, homodimer.

Its subcellular location is the cytoplasm. Functionally, participates actively in the response to hyperosmotic and heat shock by preventing the aggregation of stress-denatured proteins, in association with DnaK and GrpE. It is the nucleotide exchange factor for DnaK and may function as a thermosensor. Unfolded proteins bind initially to DnaJ; upon interaction with the DnaJ-bound protein, DnaK hydrolyzes its bound ATP, resulting in the formation of a stable complex. GrpE releases ADP from DnaK; ATP binding to DnaK triggers the release of the substrate protein, thus completing the reaction cycle. Several rounds of ATP-dependent interactions between DnaJ, DnaK and GrpE are required for fully efficient folding. In Cereibacter sphaeroides (strain ATCC 17023 / DSM 158 / JCM 6121 / CCUG 31486 / LMG 2827 / NBRC 12203 / NCIMB 8253 / ATH 2.4.1.) (Rhodobacter sphaeroides), this protein is Protein GrpE.